Consider the following 299-residue polypeptide: ATP phosphoribosyltransferase (299 aa).

This sequence belongs to the ATP phosphoribosyltransferase family. Long subfamily. In terms of assembly, equilibrium between an active dimeric form, an inactive hexameric form and higher aggregates. Interconversion between the various forms is largely reversible and is influenced by the natural substrates and inhibitors of the enzyme. The cofactor is Mg(2+).

The protein resides in the cytoplasm. It catalyses the reaction 1-(5-phospho-beta-D-ribosyl)-ATP + diphosphate = 5-phospho-alpha-D-ribose 1-diphosphate + ATP. Its pathway is amino-acid biosynthesis; L-histidine biosynthesis; L-histidine from 5-phospho-alpha-D-ribose 1-diphosphate: step 1/9. Feedback inhibited by histidine. Catalyzes the condensation of ATP and 5-phosphoribose 1-diphosphate to form N'-(5'-phosphoribosyl)-ATP (PR-ATP). Has a crucial role in the pathway because the rate of histidine biosynthesis seems to be controlled primarily by regulation of HisG enzymatic activity. The sequence is that of ATP phosphoribosyltransferase from Buchnera aphidicola subsp. Baizongia pistaciae (strain Bp).